The primary structure comprises 571 residues: MSVTGQDNKELQQEFVIVGEPIVPGIGLGKALLLGKSSLRIRELTLPQEEVEHEISRYYKALKRSRSDLAALEKEAKGKQGYQEIASILQAHLEIIKDPLLTEEVVKTIRKDRKNAEFVFSSVMGEIEKSLCAVQKTTATRVDRVQDIHDISNRVIGHLCCQHKSSLGEFDQNLIVFSEELTPSEAANANPEYIRGFVSLEGAKTSHTAIVSLAKNIPYVANFTTELWDTIKEFSGTLVLINGDKGEITFNPQLSTIQTYYRKQASVSVTVPVQVQTGKNLPLISLSAQIVSTEELPMIERESPGTSVGLFRSEFMAFSLGRLPCVEEQADQYAQLVQFQCSDIHVLRLFDFGEDKECPCISSSHRSVRWLLEQEKVLKEQLQAIAIVSRIGRLKVLIPGVIDASEIALVKRLFQEEIRLLKGISENILWGSMIEIPSAVWMIEEILQESSFVALGTNDLAQYTLGTSRERSLLGERSRVPHPSVIRMIHHVVEQAKQKNVPVSVCGEMAGDPALLPMFLGLGVKELSAVIPAINSLKMRLLDLNSRECSRLTKQLLRAKTYEEVHQLLYV.

Histidine 207 acts as the Tele-phosphohistidine intermediate in catalysis. The phosphoenolpyruvate site is built by arginine 312 and arginine 348. Mg(2+) contacts are provided by glutamate 435 and aspartate 459. Residues asparagine 458–aspartate 459 and arginine 469 each bind phosphoenolpyruvate. Residue cysteine 506 is the Proton donor of the active site.

Belongs to the PEP-utilizing enzyme family. As to quaternary structure, homodimer. It depends on Mg(2+) as a cofactor.

It is found in the cytoplasm. The enzyme catalyses L-histidyl-[protein] + phosphoenolpyruvate = N(pros)-phospho-L-histidyl-[protein] + pyruvate. Functionally, general (non sugar-specific) component of the phosphoenolpyruvate-dependent sugar phosphotransferase system (sugar PTS). This major carbohydrate active-transport system catalyzes the phosphorylation of incoming sugar substrates concomitantly with their translocation across the cell membrane. Enzyme I transfers the phosphoryl group from phosphoenolpyruvate (PEP) to the phosphoryl carrier protein (HPr). The protein is Phosphoenolpyruvate-protein phosphotransferase (ptsI) of Chlamydia trachomatis serovar D (strain ATCC VR-885 / DSM 19411 / UW-3/Cx).